The sequence spans 92 residues: Probable Fe(2+)-trafficking protein (92 aa).

It belongs to the Fe(2+)-trafficking protein family.

Could be a mediator in iron transactions between iron acquisition and iron-requiring processes, such as synthesis and/or repair of Fe-S clusters in biosynthetic enzymes. This Shewanella frigidimarina (strain NCIMB 400) protein is Probable Fe(2+)-trafficking protein.